An 80-amino-acid polypeptide reads, in one-letter code: Exodeoxyribonuclease 7 small subunit (80 aa).

Belongs to the XseB family. As to quaternary structure, heterooligomer composed of large and small subunits.

It is found in the cytoplasm. The catalysed reaction is Exonucleolytic cleavage in either 5'- to 3'- or 3'- to 5'-direction to yield nucleoside 5'-phosphates.. In terms of biological role, bidirectionally degrades single-stranded DNA into large acid-insoluble oligonucleotides, which are then degraded further into small acid-soluble oligonucleotides. In Aliivibrio fischeri (strain ATCC 700601 / ES114) (Vibrio fischeri), this protein is Exodeoxyribonuclease 7 small subunit.